Consider the following 179-residue polypeptide: Adenine phosphoribosyltransferase (179 aa).

Belongs to the purine/pyrimidine phosphoribosyltransferase family. As to quaternary structure, homodimer.

The protein localises to the cytoplasm. It catalyses the reaction AMP + diphosphate = 5-phospho-alpha-D-ribose 1-diphosphate + adenine. It participates in purine metabolism; AMP biosynthesis via salvage pathway; AMP from adenine: step 1/1. Its function is as follows. Catalyzes a salvage reaction resulting in the formation of AMP, that is energically less costly than de novo synthesis. This is Adenine phosphoribosyltransferase from Helicobacter pylori (strain ATCC 700392 / 26695) (Campylobacter pylori).